A 265-amino-acid chain; its full sequence is Palmitoyltransferase ZDHHC21 (265 aa).

Residues 1–16 (MGLRIHFVVDPHGWCC) lie on the Cytoplasmic side of the membrane. A helical transmembrane segment spans residues 17 to 37 (MGLIVFVWLYNFFLIPKIVLF). Topologically, residues 38 to 44 (PHYEEGH) are extracellular. The chain crosses the membrane as a helical span at residues 45 to 65 (IPGILIIIFYGIAMFCLVALV). Over 66–133 (RASITDPGRL…NNCVGEDNHW (68 aa)) the chain is Cytoplasmic. The 51-residue stretch at 90–140 (ELCNKCNLMRPKRSHHCSRCGHCVRRMDHHCPWINNCVGEDNHWLFLQLCF) folds into the DHHC domain. Catalysis depends on cysteine 120, which acts as the S-palmitoyl cysteine intermediate. The helical transmembrane segment at 134–154 (LFLQLCFYTELLTCYALMFSF) threads the bilayer. At 155 to 185 (CHYYYFLPLKKRNLDLFVVRHELAIMRLAAF) the chain is on the extracellular side. The chain crosses the membrane as a helical span at residues 186-206 (MGITMLVGITGLFYTQLIGII). Topologically, residues 207–265 (TDTTSIEKMSNCCEEISRPRKPWQQTFSEVFGTRWKILWFIPFRRRQPLRVPYHFANHV) are cytoplasmic.

The protein belongs to the DHHC palmitoyltransferase family.

It is found in the golgi apparatus membrane. Its subcellular location is the golgi apparatus. The protein localises to the cis-Golgi network membrane. The protein resides in the cell membrane. It carries out the reaction L-cysteinyl-[protein] + hexadecanoyl-CoA = S-hexadecanoyl-L-cysteinyl-[protein] + CoA. In terms of biological role, palmitoyltransferase that catalyzes the addition of palmitate onto various protein substrates. Palmitoylates sex steroid hormone receptors, including ESR1, PGR and AR, thereby regulating their targeting to the plasma membrane. This affects rapid intracellular signaling by sex hormones via ERK and AKT kinases and the generation of cAMP, but does not affect that mediated by their nuclear receptor. Palmitoylates FYN, regulates its localization in hair follicles and plays a key role in epidermal homeostasis and hair follicle differentiation. Through the palmitoylation of PLCB1 and the regulation of PLCB1 downstream signaling may indirectly regulate the function of the endothelial barrier and the adhesion of leukocytes to the endothelium. Also has a palmitoyltransferase activity toward ADRA1D, positively regulating its activity and expression and may thereby play a role in vascular contraction. May also palmitoylate eNOS and LCK. This is Palmitoyltransferase ZDHHC21 from Bos taurus (Bovine).